Consider the following 564-residue polypeptide: DNA ligase B (564 aa).

Catalysis depends on lysine 130, which acts as the N6-AMP-lysine intermediate.

Belongs to the NAD-dependent DNA ligase family. LigB subfamily.

It catalyses the reaction NAD(+) + (deoxyribonucleotide)n-3'-hydroxyl + 5'-phospho-(deoxyribonucleotide)m = (deoxyribonucleotide)n+m + AMP + beta-nicotinamide D-nucleotide.. Functionally, catalyzes the formation of phosphodiester linkages between 5'-phosphoryl and 3'-hydroxyl groups in double-stranded DNA using NAD as a coenzyme and as the energy source for the reaction. The polypeptide is DNA ligase B (Klebsiella pneumoniae subsp. pneumoniae (strain ATCC 700721 / MGH 78578)).